The sequence spans 150 residues: Cytochrome c oxidase subunit 5A, mitochondrial (150 aa).

Residues 1-41 constitute a mitochondrion transit peptide; sequence MLGAALRRCAVAATTWAGPRGHLHSARTPGPAAAIQSVRCY. The SIFI-degron motif lies at 2-17; sequence LGAALRRCAVAATTWA. N6-acetyllysine is present on residues Lys87 and Lys113. A Phosphothreonine modification is found at Thr141.

This sequence belongs to the cytochrome c oxidase subunit 5A family. In terms of assembly, component of the cytochrome c oxidase (complex IV, CIV), a multisubunit enzyme composed of 14 subunits. The complex is composed of a catalytic core of 3 subunits MT-CO1, MT-CO2 and MT-CO3, encoded in the mitochondrial DNA, and 11 supernumerary subunits COX4I, COX5A, COX5B, COX6A, COX6B, COX6C, COX7A, COX7B, COX7C, COX8 and NDUFA4, which are encoded in the nuclear genome. The complex exists as a monomer or a dimer and forms supercomplexes (SCs) in the inner mitochondrial membrane with NADH-ubiquinone oxidoreductase (complex I, CI) and ubiquinol-cytochrome c oxidoreductase (cytochrome b-c1 complex, complex III, CIII), resulting in different assemblies (supercomplex SCI(1)III(2)IV(1) and megacomplex MCI(2)III(2)IV(2)). Interacts with AFG1L. Interacts with RAB5IF. In response to mitochondrial stress, the precursor protein is ubiquitinated by the SIFI complex in the cytoplasm before mitochondrial import, leading to its degradation. Within the SIFI complex, UBR4 initiates ubiquitin chain that are further elongated or branched by KCMF1.

It is found in the mitochondrion inner membrane. It functions in the pathway energy metabolism; oxidative phosphorylation. In terms of biological role, component of the cytochrome c oxidase, the last enzyme in the mitochondrial electron transport chain which drives oxidative phosphorylation. The respiratory chain contains 3 multisubunit complexes succinate dehydrogenase (complex II, CII), ubiquinol-cytochrome c oxidoreductase (cytochrome b-c1 complex, complex III, CIII) and cytochrome c oxidase (complex IV, CIV), that cooperate to transfer electrons derived from NADH and succinate to molecular oxygen, creating an electrochemical gradient over the inner membrane that drives transmembrane transport and the ATP synthase. Cytochrome c oxidase is the component of the respiratory chain that catalyzes the reduction of oxygen to water. Electrons originating from reduced cytochrome c in the intermembrane space (IMS) are transferred via the dinuclear copper A center (CU(A)) of subunit 2 and heme A of subunit 1 to the active site in subunit 1, a binuclear center (BNC) formed by heme A3 and copper B (CU(B)). The BNC reduces molecular oxygen to 2 water molecules using 4 electrons from cytochrome c in the IMS and 4 protons from the mitochondrial matrix. This Symphalangus syndactylus (Siamang) protein is Cytochrome c oxidase subunit 5A, mitochondrial (COX5A).